The primary structure comprises 105 residues: MIAGYIFLLIAILSEAAAAAMLKISDGFARWQPSVLVVIGYGLAFYMMSLTLQVIPLSLSYATWSGAGTVLTAIIGVLWFQEKLNRRNIAGIICLVSGVVLINLS.

Transmembrane regions (helical) follow at residues 2 to 22 (IAGY…AAML), 35 to 55 (VLVV…LQVI), 60 to 80 (SYAT…VLWF), and 87 to 104 (RNIA…LINL).

This sequence belongs to the drug/metabolite transporter (DMT) superfamily. Small multidrug resistance (SMR) (TC 2.A.7.1) family. EbrA/EbrB subfamily. In terms of assembly, the efflux pump is composed of EbrA and EbrB.

Its subcellular location is the cell membrane. Part of a multidrug efflux pump. Confers resistance to cationic lipophilic dyes such as ethidium bromide, acriflavine, pyronine Y and safranin O. The efflux is probably coupled to an influx of protons. This is Multidrug resistance protein EbrA (ebrA) from Bacillus licheniformis (strain ATCC 14580 / DSM 13 / JCM 2505 / CCUG 7422 / NBRC 12200 / NCIMB 9375 / NCTC 10341 / NRRL NRS-1264 / Gibson 46).